The sequence spans 136 residues: uncharacterized protein (136 aa).

It localises to the mitochondrion. This is an uncharacterized protein from Arabidopsis thaliana (Mouse-ear cress).